The primary structure comprises 92 residues: Small ribosomal subunit protein uS19 (92 aa).

It belongs to the universal ribosomal protein uS19 family.

Its function is as follows. Protein S19 forms a complex with S13 that binds strongly to the 16S ribosomal RNA. The protein is Small ribosomal subunit protein uS19 of Borrelia duttonii (strain Ly).